The following is a 1395-amino-acid chain: MTGAEIESGAQVKPEKKPGEEVVGGAEIENDVPLVVRPKVRTQAQIMPGARPKNKSKVMPGASTKVETSAVGGARPKSKAKAIPVSRFKEEAQMWAQPRFGAERLSKTERNSQTNIIASPLVSTDSVLVAKTKYLSEDRELVNTDTESFPRRKAHYQAGFQPSFRSKEETNMGSWCCPRPTSKQEASPNSDFKWVDKSVSSLFWSGDEVTAKFHPGNRVKDSNRSMHMANQEANTMSRSQTNQELYIASSSGSEDESVKTPWFWARDKTNTWSGPREDPNSRSRFRSKKEVYVESSSGSEHEDHLESWFGAGKEAKFRSKMRAGKEANNRARHRAKREACIDFMPGSIDVIKKESCFWPEENANTFSRPMIKKEARARAMTKEEAKTKARARAKQEARSEEEALIGTWFWATDESSMADEASIESSLQVEDESIIGSWFWTEEEASMGTGASSKSRPRTDGERIGDSLFGAREKTSMKTGAEATSESILAADDEQVIIGSWFWAGEEVNQEAEEETIFGSWFWVIDAASVESGVGVSCESRTRSEEEEVIGPWFWSGEQVDIEAGIGEEARPGAEEETIFGSWFWAENQTYMDCRAETSCDTMQGAEEEEPIIGSWFWTRVEACVEGDVNSKSSLEDKEEAMIPCFGAKEEVSMKHGTGVRCRFMAGAEETNNKSCFWAEKEPCMYPAGGGSWKSRPEEEEDIVNSWFWSRKYTKPEAIIGSWLWATEESNIDGTGEKAKLLTEEETIINSWFWKEDEAISEATDREESRPEAEEGDIIGSWFWAGEEDRLEPAAETREEDRLAAEKEGIVGSWFGAREETIRREAGSCSKSSPKAEEEEVIIGSWFWEEEASPEAVAGVGFESKPGTEEEEITVGSWFWPEEEASIQAGSQAVEEMESETEEETIFGSWFWDGKEVSEEAGPCCVSKPEDDEEMIVESWFWSRDKAIKETGTVATCESKPENEEGAIVGSWFEAEDEVDNRTDNGSNCGSRTLADEDEAIVGSWFWAGDEAHFESNPSPVFRAICRSTCSVEQEPDPSRRPQSWEEVTVQFKPGPWGRVGFPSISPFRFPKEAASLFCEMFGGKPRNMVLSPEGEDQESLLQPDQPSPEFPFQYDPSYRSVQEIREHLRAKESTEPESSSCNCIQCELKIGSEEFEELLLLMEKIRDPFIHEISKIAMGMRSASQFTRDFIRDSGVVSLIETLLNYPSSRVRTSFLENMIRMAPPYPNLNIIQTYICKVCEETLAYSVDSPEQLSGIRMIRHLTTTTDYHTLVANYMSGFLSLLATGNAKTRFHVLKMLLNLSENLFMTKELLSAEAVSEFIGLFNREETNDNIQIVLAIFENIGNNIKKETVFSDDDFNIEPLISAFHKVEKFAKELQGKTDNQNDPEGDQEN.

Disordered stretches follow at residues 1–25, 45–83, and 269–288; these read MTGA…VVGG, QIMP…AKAI, and TNTW…FRSK. A compositionally biased stretch (basic and acidic residues) spans 269–281; that stretch reads TNTWSGPREDPNS. Ser-297 bears the Phosphoserine mark. The segment at 446 to 469 is disordered; that stretch reads SMGTGASSKSRPRTDGERIGDSLF. The span at 457 to 469 shows a compositional bias: basic and acidic residues; it reads PRTDGERIGDSLF. Ser-631 and Ser-899 each carry phosphoserine. The tract at residues 899–1395 is OPRD1-binding; it reads SETEEETIFG…QNDPEGDQEN (497 aa).

Belongs to the GPRASP family. As to quaternary structure, interacts with cytoplasmic tails of a variety of G-protein coupled receptors such as D2 dopamine receptor/DRD2, delta opioid receptor/OPRD1, beta-2 adrenergic receptor/ADRB2 and D4 dopamine receptor/DRD4. Interacts with PER1. Interacts with BECN2; the interaction is direct. In terms of tissue distribution, expressed in the brain, with lower expression in medulla, spinal cord and substantia nigra.

The protein resides in the cytoplasm. Its function is as follows. Modulates lysosomal sorting and functional down-regulation of a variety of G-protein coupled receptors. Targets receptors for degradation in lysosomes via its interaction with BECN2. In Homo sapiens (Human), this protein is G-protein coupled receptor-associated sorting protein 1 (GPRASP1).